A 158-amino-acid polypeptide reads, in one-letter code: Small ribosomal subunit protein uS7c (158 aa).

This sequence belongs to the universal ribosomal protein uS7 family. Part of the 30S ribosomal subunit.

It is found in the plastid. The protein resides in the chloroplast. One of the primary rRNA binding proteins, it binds directly to 16S rRNA where it nucleates assembly of the head domain of the 30S subunit. In Trieres chinensis (Marine centric diatom), this protein is Small ribosomal subunit protein uS7c (rps7).